The primary structure comprises 191 residues: tRNA-specific adenosine deaminase 2 (191 aa).

Positions 20–145 constitute a CMP/dCMP-type deaminase domain; the sequence is QETEKWMEEA…SVLNIASADL (126 aa). Residue histidine 71 coordinates Zn(2+). The active-site Proton donor is the glutamate 73. Zn(2+)-binding residues include cysteine 107 and cysteine 110.

It belongs to the cytidine and deoxycytidylate deaminase family. ADAT2 subfamily. It depends on Zn(2+) as a cofactor.

It carries out the reaction adenosine(34) in tRNA + H2O + H(+) = inosine(34) in tRNA + NH4(+). In terms of biological role, probably participates in deamination of adenosine-34 to inosine in many tRNAs. This Mus musculus (Mouse) protein is tRNA-specific adenosine deaminase 2 (Adat2).